We begin with the raw amino-acid sequence, 333 residues long: Phosphoenolpyruvate transferase (333 aa).

Asp-65 contributes to the 7,8-didemethyl-8-hydroxy-5-deazariboflavin binding site.

The protein belongs to the CofD family. In terms of assembly, homodimer. The cofactor is Mg(2+).

The catalysed reaction is enolpyruvoyl-2-diphospho-5'-guanosine + 7,8-didemethyl-8-hydroxy-5-deazariboflavin = dehydro coenzyme F420-0 + GMP + H(+). It functions in the pathway cofactor biosynthesis; coenzyme F420 biosynthesis. Its function is as follows. Catalyzes the transfer of the phosphoenolpyruvate moiety from enoylpyruvoyl-2-diphospho-5'-guanosine (EPPG) to 7,8-didemethyl-8-hydroxy-5-deazariboflavin (FO) with the formation of dehydro coenzyme F420-0 and GMP. This Mycobacterium leprae (strain TN) protein is Phosphoenolpyruvate transferase.